The chain runs to 573 residues: Membrane protein insertase YidC (573 aa).

Residues 6–26 (VFLIFAWLMVAALLWMEWGKD) traverse the membrane as a helical segment. Positions 63–82 (PQAGSPAAVPATSTTTATPA) are disordered. A run of 5 helical transmembrane segments spans residues 355 to 375 (FSIM…LHSF), 379 to 399 (WGWA…PLSA), 446 to 466 (GGCL…WVLV), 488 to 508 (PYFI…KLTP), and 524 to 544 (PLVF…YWVV).

The protein belongs to the OXA1/ALB3/YidC family. Type 1 subfamily. Interacts with the Sec translocase complex via SecD. Specifically interacts with transmembrane segments of nascent integral membrane proteins during membrane integration.

It is found in the cell inner membrane. Functionally, required for the insertion and/or proper folding and/or complex formation of integral membrane proteins into the membrane. Involved in integration of membrane proteins that insert both dependently and independently of the Sec translocase complex, as well as at least some lipoproteins. Aids folding of multispanning membrane proteins. This Xanthomonas campestris pv. campestris (strain 8004) protein is Membrane protein insertase YidC.